The sequence spans 66 residues: Large ribosomal subunit protein bL31 (66 aa).

Residues Cys16, Cys18, Cys36, and Cys39 each coordinate Zn(2+).

Belongs to the bacterial ribosomal protein bL31 family. Type A subfamily. In terms of assembly, part of the 50S ribosomal subunit. The cofactor is Zn(2+).

Binds the 23S rRNA. This chain is Large ribosomal subunit protein bL31, found in Campylobacter hominis (strain ATCC BAA-381 / DSM 21671 / CCUG 45161 / LMG 19568 / NCTC 13146 / CH001A).